Consider the following 795-residue polypeptide: Phenylalanine--tRNA ligase beta subunit (795 aa).

Positions 39-148 (AGVFDGVKVG…ENAPIGMDFR (110 aa)) constitute a tRNA-binding domain. The B5 domain maps to 401-476 (PKPNQVALRR…RIYGYNNIPN (76 aa)). 4 residues coordinate Mg(2+): Asp454, Asp460, Glu463, and Glu464. Residues 701 to 794 (SKFPANRRDI…VSAQFGAALR (94 aa)) form the FDX-ACB domain.

Belongs to the phenylalanyl-tRNA synthetase beta subunit family. Type 1 subfamily. In terms of assembly, tetramer of two alpha and two beta subunits. Mg(2+) is required as a cofactor.

The protein resides in the cytoplasm. It carries out the reaction tRNA(Phe) + L-phenylalanine + ATP = L-phenylalanyl-tRNA(Phe) + AMP + diphosphate + H(+). In Vibrio cholerae serotype O1 (strain ATCC 39315 / El Tor Inaba N16961), this protein is Phenylalanine--tRNA ligase beta subunit (pheT).